The following is a 159-amino-acid chain: Phosphopantetheine adenylyltransferase (159 aa).

Ser-9 lines the substrate pocket. Residues 9–10 (SF) and His-17 contribute to the ATP site. Substrate-binding residues include Lys-41, Leu-73, and Lys-87. ATP is bound by residues 88 to 90 (GLR), Glu-98, and 122 to 128 (YSFLSSS).

This sequence belongs to the bacterial CoaD family. In terms of assembly, homohexamer. Mg(2+) serves as cofactor.

Its subcellular location is the cytoplasm. The catalysed reaction is (R)-4'-phosphopantetheine + ATP + H(+) = 3'-dephospho-CoA + diphosphate. It functions in the pathway cofactor biosynthesis; coenzyme A biosynthesis; CoA from (R)-pantothenate: step 4/5. In terms of biological role, reversibly transfers an adenylyl group from ATP to 4'-phosphopantetheine, yielding dephospho-CoA (dPCoA) and pyrophosphate. This is Phosphopantetheine adenylyltransferase from Streptomyces griseus subsp. griseus (strain JCM 4626 / CBS 651.72 / NBRC 13350 / KCC S-0626 / ISP 5235).